Reading from the N-terminus, the 219-residue chain is Protein OPG170 (219 aa).

The signal sequence occupies residues 1 to 16; it reads MYSLLFIILMCIPFSF. The N-linked (GlcNAc...) asparagine; by host glycan is linked to Asn70.

This sequence belongs to the orthopoxvirus OPG170 family.

It is found in the secreted. May interact with several cellular chemokines to interfere with chemokine-glycosaminoglycan (GAG) interactions at the cell surface to alter chemotaxis of nearby responsive cells. The protein is Protein OPG170 (OPG170) of Vaccinia virus (strain Copenhagen) (VACV).